A 146-amino-acid polypeptide reads, in one-letter code: Hemoglobin subunit beta (146 aa).

The residue at position 1 (valine 1) is an N-acetylvaline. The region spanning 2-146 is the Globin domain; it reads HLTGEEKSTV…VATALAHKYH (145 aa). Phosphoserine is present on serine 44. At lysine 59 the chain carries N6-acetyllysine. A heme b-binding site is contributed by histidine 63. Lysine 82 carries the post-translational modification N6-acetyllysine. Position 92 (histidine 92) interacts with heme b. Cysteine 93 bears the S-nitrosocysteine mark. Lysine 144 bears the N6-acetyllysine mark.

This sequence belongs to the globin family. In terms of assembly, heterotetramer of two alpha chains and two beta chains. Red blood cells.

In terms of biological role, involved in oxygen transport from the lung to the various peripheral tissues. In Macrotus californicus (Californian leaf-nosed bat), this protein is Hemoglobin subunit beta (HBB).